A 258-amino-acid chain; its full sequence is MAKRLDLKDVNIYYGKFHAVADVGLSVPPRNVTAFIGPSGCGKSTVLRSLNRMHEVTPGARVEGSILLDGEDIYGSGIDPVGVRKTIGMVFQRPNPFPTMSIKDNVVAGLKLQGERSKKRLDEVAERSLRGANLWTEVKDRLDKPGGGLSGGQQQRLCIARAIAVSPDVLLMDEPCSALDPISTLAIEDLITELKKDFTIVIVTHNMQQAARVSDQTAFFNLEATGKPGRLVEIDDTEKIFSNPTQKATEDYISGRFG.

The 243-residue stretch at 5–247 (LDLKDVNIYY…EKIFSNPTQK (243 aa)) folds into the ABC transporter domain. An ATP-binding site is contributed by 37 to 44 (GPSGCGKS).

This sequence belongs to the ABC transporter superfamily. Phosphate importer (TC 3.A.1.7) family. As to quaternary structure, the complex is composed of two ATP-binding proteins (PstB), two transmembrane proteins (PstC and PstA) and a solute-binding protein (PstS).

It localises to the cell membrane. It catalyses the reaction phosphate(out) + ATP + H2O = ADP + 2 phosphate(in) + H(+). Functionally, part of the ABC transporter complex PstSACB involved in phosphate import. Responsible for energy coupling to the transport system. In Rhodococcus jostii (strain RHA1), this protein is Phosphate import ATP-binding protein PstB.